The following is a 796-amino-acid chain: Nuclear cap-binding protein subunit 1 (796 aa).

A disordered region spans residues 1-26 (MSRRRHSDGDDGGQSHKRRRTSEPVE). Residues 28 to 240 (EDRLESLICR…CLYAQIQKLK (213 aa)) enclose the MIF4G domain. Residues 641-719 (LHSTIRKMNK…SEQKNLFLVI (79 aa)) adopt a coiled-coil conformation. The segment at 664 to 695 (DKLERQQHKKQKDSGDEEDMEKNSEDEDGQLE) is disordered. Over residues 678–695 (GDEEDMEKNSEDEDGQLE) the composition is skewed to acidic residues.

The protein belongs to the NCBP1 family. In terms of assembly, component of the nuclear cap-binding complex (CBC), a heterodimer composed of ncbp1/cbp80 and ncbp2/cbp20 that interacts with m7GpppG-capped RNA. Component of an alternative nuclear cap-binding complex (CBC) composed of ncbp1/cbp80 and ncbp3.

It is found in the nucleus. Its subcellular location is the cytoplasm. Functionally, component of the cap-binding complex (CBC), which binds cotranscriptionally to the 5'-cap of pre-mRNAs and is involved in various processes such as pre-mRNA splicing, translation regulation, nonsense-mediated mRNA decay, RNA-mediated gene silencing (RNAi) by microRNAs (miRNAs) and mRNA export. The CBC complex is involved in mRNA export from the nucleus, leading to the recruitment of the mRNA export machinery to the 5'-end of mRNA and to mRNA export in a 5' to 3' direction through the nuclear pore. The CBC complex is also involved in mediating U snRNA and intronless mRNAs export from the nucleus. The CBC complex is essential for a pioneer round of mRNA translation, before steady state translation when the CBC complex is replaced by cytoplasmic cap-binding protein eIF4E. The pioneer round of mRNA translation mediated by the CBC complex plays a central role in nonsense-mediated mRNA decay (NMD), NMD only taking place in mRNAs bound to the CBC complex, but not on eIF4E-bound mRNAs. The CBC complex enhances NMD in mRNAs containing at least one exon-junction complex (EJC), promoting the interaction between UPF1 and UPF2. The CBC complex is also involved in 'failsafe' NMD, which is independent of the EJC complex, while it does not participate in Staufen-mediated mRNA decay (SMD). During cell proliferation, the CBC complex is also involved in microRNAs (miRNAs) biogenesis via its interaction with SRRT/ARS2 and is required for miRNA-mediated RNA interference. The CBC complex also acts as a negative regulator of parn, thereby acting as an inhibitor of mRNA deadenylation. In the CBC complex, ncbp1/cbp80 does not bind directly capped RNAs (m7GpppG-capped RNA) but is required to stabilize the movement of the N-terminal loop of ncbp2/cbp20 and lock the CBC into a high affinity cap-binding state with the cap structure. Associates with NCBP3 to form an alternative cap-binding complex (CBC) which plays a key role in mRNA export. The conventional CBC with NCBP2 binds both small nuclear RNA (snRNA) and messenger (mRNA) and is involved in their export from the nucleus whereas the alternative CBC with NCBP3 does not bind snRNA and associates only with mRNA thereby playing a role only in mRNA export. The polypeptide is Nuclear cap-binding protein subunit 1 (ncbp1) (Salmo salar (Atlantic salmon)).